The chain runs to 206 residues: Elongation factor 1-beta (206 aa).

Position 2 is an N-acetylalanine (alanine 2). Residue lysine 13 forms a Glycyl lysine isopeptide (Lys-Gly) (interchain with G-Cter in ubiquitin) linkage. 2 positions are modified to phosphoserine: serine 31 and serine 86.

This sequence belongs to the EF-1-beta/EF-1-delta family. As to quaternary structure, the eukaryotic elongation factor 1 complex (eEF1) is probably a heterohexamer. Two trimeric complexes, each composed of eEF1A (TEF1 or TEF2), eEF1Balpha (EFB1) and eEF1Bgamma (CAM1 or TEF4), are probably dimerized via the eF1Bgamma subunits. eEF1Balpha interacts directly with eEF1A. eEF1Balpha and eEF1Bgamma form the eEF1B subcomplex with the GEF activity. S-thiolated in response to oxidative stress, probably inhibiting the protein and causing a reduction in protein synthesis.

The protein operates within protein biosynthesis; polypeptide chain elongation. Its function is as follows. Catalytic subunit of the guanine nucleotide exchange factor (GEF) (eEF1B subcomplex) of the eukaryotic elongation factor 1 complex (eEF1). Stimulates the exchange of GDP for GTP on elongation factor 1A (eEF1A), probably by displacing GDP from the nucleotide binding pocket in eEF1A. The 30-fold higher concentration of GTP compared to GDP in cells favors the formation of eEF1A-GTP, which rapidly forms a ternary complex with aminoacyl-tRNA that in turn displaces eEF1B from the complex. The polypeptide is Elongation factor 1-beta (EFB1) (Saccharomyces cerevisiae (strain ATCC 204508 / S288c) (Baker's yeast)).